Here is a 124-residue protein sequence, read N- to C-terminus: Small ribosomal subunit protein uS12 (124 aa).

The segment at 1-25 (MATINQLVRKPRQATTYKSASPALD) is disordered. Aspartate 89 carries the post-translational modification 3-methylthioaspartic acid.

The protein belongs to the universal ribosomal protein uS12 family. Part of the 30S ribosomal subunit. Contacts proteins S8 and S17. May interact with IF1 in the 30S initiation complex.

With S4 and S5 plays an important role in translational accuracy. In terms of biological role, interacts with and stabilizes bases of the 16S rRNA that are involved in tRNA selection in the A site and with the mRNA backbone. Located at the interface of the 30S and 50S subunits, it traverses the body of the 30S subunit contacting proteins on the other side and probably holding the rRNA structure together. The combined cluster of proteins S8, S12 and S17 appears to hold together the shoulder and platform of the 30S subunit. This chain is Small ribosomal subunit protein uS12, found in Stenotrophomonas maltophilia (strain R551-3).